Reading from the N-terminus, the 249-residue chain is MRILISNDDGVTAPGLAALHGALVDYAECVVIAPDQDKSGAGSSLTLDRPLHPQTLANGFISLNGTPTDCVHLGLNGLLPETPDMVVSGINLGANLGDDVIYSGTVAAALEGRFLGGTSLAFSLLSRLPDNLPSAAFIARRLVEAQSRLELPPRTVLNVNIPNLPLEHIRGIQVTRLGHRARAAAPTKVVNPRGKEGYWIAVAGDAEDGGPGTDFHAVMQGYVSITPLQLDRTFNDAFEQLHGWLEGVL.

A divalent metal cation contacts are provided by aspartate 8, aspartate 9, serine 39, and asparagine 91.

This sequence belongs to the SurE nucleotidase family. The cofactor is a divalent metal cation.

The protein localises to the cytoplasm. It catalyses the reaction a ribonucleoside 5'-phosphate + H2O = a ribonucleoside + phosphate. Functionally, nucleotidase that shows phosphatase activity on nucleoside 5'-monophosphates. This chain is 5'-nucleotidase SurE, found in Pseudomonas putida (strain W619).